The chain runs to 286 residues: Putative chaperone BssE (286 aa).

ATP is bound by residues Gly47 to Ser54 and Gly108 to Glu115.

This sequence belongs to the CbbQ/NirQ/NorQ/GpvN family.

May have a role in assembly and/or activation of benzylsuccinate synthase. The polypeptide is Putative chaperone BssE (bssE) (Thauera aromatica).